Reading from the N-terminus, the 340-residue chain is DNA-directed RNA polymerase subunit alpha (340 aa).

Positions 1-237 (MSSDELVYMN…EQMNPFINFD (237 aa)) are alpha N-terminal domain (alpha-NTD). The tract at residues 256-340 (FNENLYRSVD…PEEDQIKEGE (85 aa)) is alpha C-terminal domain (alpha-CTD).

This sequence belongs to the RNA polymerase alpha chain family. As to quaternary structure, homodimer. The RNAP catalytic core consists of 2 alpha, 1 beta, 1 beta' and 1 omega subunit. When a sigma factor is associated with the core the holoenzyme is formed, which can initiate transcription.

The catalysed reaction is RNA(n) + a ribonucleoside 5'-triphosphate = RNA(n+1) + diphosphate. Its function is as follows. DNA-dependent RNA polymerase catalyzes the transcription of DNA into RNA using the four ribonucleoside triphosphates as substrates. The sequence is that of DNA-directed RNA polymerase subunit alpha from Desulforapulum autotrophicum (strain ATCC 43914 / DSM 3382 / VKM B-1955 / HRM2) (Desulfobacterium autotrophicum).